The following is a 1606-amino-acid chain: E3 ubiquitin-protein ligase HECW1 (1606 aa).

The 137-residue stretch at 182 to 318 folds into the C2 domain; sequence SAAPIFKSIG…LERHAIGDRV (137 aa). 4 disordered regions span residues 349–418, 459–538, 566–672, and 730–815; these read DDEE…PAEE, AEQL…CSLP, LLHS…SCEG, and STVF…SQLP. The segment covering 354 to 373 has biased composition (polar residues); sequence SLSTEPESAQIQDSPMNNLM. Basic and acidic residues predominate over residues 380-392; the sequence is PRSEAPESSESWK. Acidic residues-rich tracts occupy residues 500-511 and 579-588; these read EEEEKEQEEEGD and AEEEDGAEEE. Positions 589-600 are enriched in basic and acidic residues; the sequence is STLKDSSEKDGL. The segment covering 612-621 has biased composition (acidic residues); that stretch reads ALEEDREEPE. 3 stretches are compositionally biased toward polar residues: residues 651-663, 751-765, and 806-815; these read HPST…SSPR, DSMQ…STNG, and HNSQPVSQLP. The 34-residue stretch at 829-862 folds into the WW 1 domain; sequence EPLPPNWEARIDSHGRVFYVDHVNRTTTWQRPTA. Residues 870 to 901 adopt a coiled-coil conformation; that stretch reads RRSGSIQQMEQLNRRYQNIQRTIATERSEEDS. Phosphoserine is present on residues Ser-874, Ser-937, and Ser-939. Residues 894 to 938 form a disordered region; it reads TERSEEDSGSQSCEQAPAGGGGGGGSDSEAESSQSSLDLRREGSL. Positions 1018-1051 constitute a WW 2 domain; it reads LELPRGWEIKTDQQGKSFFVDHNSRATTFIDPRI. The 336-residue stretch at 1271 to 1606 folds into the HECT domain; sequence SRKELQRNKL…VEETSTFGLE (336 aa). Catalysis depends on Cys-1574, which acts as the Glycyl thioester intermediate.

Interacts with DVL1 and SSR3. Also interacts with mutant SOD1. Predominantly expressed in neurons of adult and fetal brain. Weakly expressed in the kidney.

The protein localises to the cytoplasm. The enzyme catalyses S-ubiquitinyl-[E2 ubiquitin-conjugating enzyme]-L-cysteine + [acceptor protein]-L-lysine = [E2 ubiquitin-conjugating enzyme]-L-cysteine + N(6)-ubiquitinyl-[acceptor protein]-L-lysine.. It participates in protein modification; protein ubiquitination. In terms of biological role, E3 ubiquitin-protein ligase that mediates ubiquitination and subsequent degradation of DVL1. Also targets the mutant SOD1 protein involved in familial amyotrophic lateral sclerosis (FALS). Forms cytotoxic aggregates with DVL1, SSR3 and mutant SOD1 that lead to motor neuron death in FALS. In Homo sapiens (Human), this protein is E3 ubiquitin-protein ligase HECW1 (HECW1).